The chain runs to 199 residues: Outer-membrane lipoprotein LolB (199 aa).

The first 28 residues, 1-28 (MSVCPAPRSPVRWLHAFTLCLLLAVLAG), serve as a signal peptide directing secretion. Residue Cys-29 is the site of N-palmitoyl cysteine attachment. A lipid anchor (S-diacylglycerol cysteine) is attached at Cys-29.

The protein belongs to the LolB family. As to quaternary structure, monomer.

Its subcellular location is the cell outer membrane. Functionally, plays a critical role in the incorporation of lipoproteins in the outer membrane after they are released by the LolA protein. The sequence is that of Outer-membrane lipoprotein LolB from Bordetella parapertussis (strain 12822 / ATCC BAA-587 / NCTC 13253).